The chain runs to 201 residues: Adenylyl-sulfate kinase (201 aa).

Residues 1 to 23 form a disordered region; it reads MALHDENVVWHSHPVTPQQREQH. 35-42 serves as a coordination point for ATP; the sequence is GLSGSGKS. Catalysis depends on serine 109, which acts as the Phosphoserine intermediate.

It belongs to the APS kinase family.

The catalysed reaction is adenosine 5'-phosphosulfate + ATP = 3'-phosphoadenylyl sulfate + ADP + H(+). Its pathway is sulfur metabolism; hydrogen sulfide biosynthesis; sulfite from sulfate: step 2/3. In terms of biological role, catalyzes the synthesis of activated sulfate. This Escherichia coli O6:K15:H31 (strain 536 / UPEC) protein is Adenylyl-sulfate kinase.